Consider the following 212-residue polypeptide: External core antigen (212 aa).

An N-terminal signal peptide occupies residues 1–19 (MQLFHLCLIISCSCPTVQA). An HBEAG region spans residues 25 to 27 (GWL). The tract at residues 165–212 (NAPILSTLPETTVVRRRGRSPRRRTPSPRRRRSQSPRRRRSQSRESQC) is disordered. Positions 178-205 (VRRRGRSPRRRTPSPRRRRSQSPRRRRS) are enriched in basic residues. A 1; half-length repeat occupies 184 to 190 (SPRRRTP). Residues 184-206 (SPRRRTPSPRRRRSQSPRRRRSQ) form a 3 X 8 AA repeats of S-P-R-R-R-R-S-Q region. A propeptide spanning residues 184–212 (SPRRRTPSPRRRRSQSPRRRRSQSRESQC) is cleaved from the precursor. Tandem repeats lie at residues 191 to 198 (SPRRRRSQ) and 199 to 206 (SPRRRRSQ).

This sequence belongs to the orthohepadnavirus precore antigen family. Homodimerizes. In terms of processing, phosphorylated. Post-translationally, cleaved by host furin.

The protein resides in the secreted. It localises to the host nucleus. In terms of biological role, may regulate immune response to the intracellular capsid in acting as a T-cell tolerogen, by having an immunoregulatory effect which prevents destruction of infected cells by cytotoxic T-cells. This immune regulation may predispose to chronicity during perinatal infections and prevent severe liver injury during adult infections. In Hepatitis B virus genotype B2 (isolate Indonesia/pIDW420/1988) (HBV-B), this protein is External core antigen.